We begin with the raw amino-acid sequence, 331 residues long: MASALWTVLPSRMSLRSLQWSLLLLSLLSFLVMWYLSLPHYNVIERVNWMYFYEYEPIYRQDFHFTLREHSNCSHQNPFLVILVTSHPSDVKARQAIRVTWGEKKSWWGYEVLTFFLLGQEAEKEDKMLALSLEDEHLLYGDIIRQDFLDTYNNLTLKTIMAFRWVTEFCPNAKYVMKTDTDVFINTGNLVKYLLNLNHSEKFFTGYPLIDNYSYRGFYQKTHISYQEYPFKVFPPYCSGLGYIMSRDLVPRIYEMMGHVKPIKFEDVYVGICLNLLKVNIHIPEDTNLFFLYRIHLDVCQLRRVIAAHGFSSKEIITFWQVMLRNTTCHY.

At 1-20 (MASALWTVLPSRMSLRSLQW) the chain is on the cytoplasmic side. Residues 21–43 (SLLLLSLLSFLVMWYLSLPHYNV) traverse the membrane as a helical; Signal-anchor for type II membrane protein segment. Over 44 to 331 (IERVNWMYFY…VMLRNTTCHY (288 aa)) the chain is Lumenal. N-linked (GlcNAc...) asparagine glycans are attached at residues asparagine 72, asparagine 154, asparagine 198, asparagine 212, and asparagine 326.

The protein belongs to the glycosyltransferase 31 family. Mg(2+) serves as cofactor.

The protein resides in the golgi apparatus membrane. The enzyme catalyses a globoside Gb3Cer (d18:1(4E)) + UDP-N-acetyl-alpha-D-galactosamine = a globoside Gb4Cer (d18:1(4E)) + UDP + H(+). It functions in the pathway protein modification; protein glycosylation. Functionally, transfers N-acetylgalactosamine onto globotriaosylceramide. Plays a critical role in preimplantation stage embryonic development. The polypeptide is UDP-GalNAc:beta-1,3-N-acetylgalactosaminyltransferase 1 (B3GALNT1) (Pongo abelii (Sumatran orangutan)).